An 88-amino-acid chain; its full sequence is Exodeoxyribonuclease 7 small subunit (88 aa).

Residues 69–88 (DPMRPDDGEPFDPSIVSTSQ) are disordered.

It belongs to the XseB family. In terms of assembly, heterooligomer composed of large and small subunits.

The protein localises to the cytoplasm. It carries out the reaction Exonucleolytic cleavage in either 5'- to 3'- or 3'- to 5'-direction to yield nucleoside 5'-phosphates.. Functionally, bidirectionally degrades single-stranded DNA into large acid-insoluble oligonucleotides, which are then degraded further into small acid-soluble oligonucleotides. In Xylella fastidiosa (strain M12), this protein is Exodeoxyribonuclease 7 small subunit.